Consider the following 354-residue polypeptide: MNRQDHGPAAVQTLRWREGRLEMIDQRVLPARFEYLPFTSAAEVAEGIRSMVVRGAPAIGCAAAYGVALESVQLRGATREAFAVGLQRGFDVLAASRPTAVNLFWALARMRAVWDANQHRAVGDIVDCLLAQAHEISADDVRINRAMGAYGAALLADGARVLTHCNAGALATAGHGTALGVIRSAVQAGKRISVIADETRPFLQGARLTAWEMVQENIPVTLITDNMAGHLMSRGEVDAIVVGTDRVAANGDVANKIGTYMVAVLAQRHNIPFYVACPLSTIDLAIPDGAAIPIEERAAEEVTGFRDCQWAAKGVQVRNPAFDVTPAELVTALITERGVLRQPNRTTIAGLFAT.

Substrate-binding positions include Arg-54–Ala-56, Arg-97, and Gln-204. Asp-245 acts as the Proton donor in catalysis. Residue Asn-255–Lys-256 coordinates substrate.

This sequence belongs to the eIF-2B alpha/beta/delta subunits family. MtnA subfamily.

It catalyses the reaction 5-(methylsulfanyl)-alpha-D-ribose 1-phosphate = 5-(methylsulfanyl)-D-ribulose 1-phosphate. Its pathway is amino-acid biosynthesis; L-methionine biosynthesis via salvage pathway; L-methionine from S-methyl-5-thio-alpha-D-ribose 1-phosphate: step 1/6. In terms of biological role, catalyzes the interconversion of methylthioribose-1-phosphate (MTR-1-P) into methylthioribulose-1-phosphate (MTRu-1-P). The protein is Methylthioribose-1-phosphate isomerase of Albidiferax ferrireducens (strain ATCC BAA-621 / DSM 15236 / T118) (Rhodoferax ferrireducens).